Reading from the N-terminus, the 347-residue chain is MPRGQKSKLRAREKRRKAREETQGLKVAHATAAEKEECPSSSPVLGDTPTSSPAAGIPQKPQGAPPTTTAAAAVSCTESDEGAKCQGEENASFSQATTSTESSVKDPVAWEAGMLMHFILRKYKMREPIMKADMLKVVDEKYKDHFTEILNGASRRLELVFGLDLKEDNPSGHTYTLVSKLNLTNDGNLSNDWDFPRNGLLMPLLGVIFLKGNSATEEEIWKFMNVLGAYDGEEHLIYGEPRKFITQDLVQEKYLKYEQVPNSDPPRYQFLWGPRAYAETTKMKVLEFLAKMNGATPRDFPSHYEEALRDEEERAQVRSSVRARRRTTATTFRARSRAPFSRSSHPM.

A compositionally biased stretch (basic residues) spans 1–17 (MPRGQKSKLRAREKRRK). A disordered region spans residues 1–104 (MPRGQKSKLR…QATTSTESSV (104 aa)). Polar residues-rich tracts occupy residues 39–53 (PSSS…TSSP) and 89–102 (ENAS…STES). The MAGE domain occupies 108–307 (VAWEAGMLMH…RDFPSHYEEA (200 aa)). Positions 315-347 (AQVRSSVRARRRTTATTFRARSRAPFSRSSHPM) are disordered. Over residues 328–347 (TATTFRARSRAPFSRSSHPM) the composition is skewed to low complexity.

Expressed only in testis.

This Homo sapiens (Human) protein is Melanoma-associated antigen B1 (MAGEB1).